A 98-amino-acid chain; its full sequence is Small ribosomal subunit protein uS17 (98 aa).

Belongs to the universal ribosomal protein uS17 family. In terms of assembly, part of the 30S ribosomal subunit.

One of the primary rRNA binding proteins, it binds specifically to the 5'-end of 16S ribosomal RNA. The chain is Small ribosomal subunit protein uS17 from Mesomycoplasma hyopneumoniae (strain 232) (Mycoplasma hyopneumoniae).